The sequence spans 270 residues: Mediator of RNA polymerase II transcription subunit 4 (270 aa).

The segment at methionine 1–glycine 22 is disordered. Alanine 2 carries the N-acetylalanine modification. 2 coiled-coil regions span residues asparagine 24–leucine 48 and histidine 90–lysine 131. Position 32 is a phosphoserine (serine 32). The tract at residues aspartate 226–aspartate 270 is disordered. A compositionally biased stretch (low complexity) spans serine 259 to aspartate 270.

The protein belongs to the Mediator complex subunit 4 family. As to quaternary structure, component of the Mediator complex, which is composed of MED1, MED4, MED6, MED7, MED8, MED9, MED10, MED11, MED12, MED13, MED13L, MED14, MED15, MED16, MED17, MED18, MED19, MED20, MED21, MED22, MED23, MED24, MED25, MED26, MED27, MED29, MED30, MED31, CCNC, CDK8 and CDC2L6/CDK11. The MED12, MED13, CCNC and CDK8 subunits form a distinct module termed the CDK8 module. Mediator containing the CDK8 module is less active than Mediator lacking this module in supporting transcriptional activation. Individual preparations of the Mediator complex lacking one or more distinct subunits have been variously termed ARC, CRSP, DRIP, PC2, SMCC and TRAP.

The protein localises to the nucleus. Its function is as follows. Component of the Mediator complex, a coactivator involved in the regulated transcription of nearly all RNA polymerase II-dependent genes. Mediator functions as a bridge to convey information from gene-specific regulatory proteins to the basal RNA polymerase II transcription machinery. Mediator is recruited to promoters by direct interactions with regulatory proteins and serves as a scaffold for the assembly of a functional preinitiation complex with RNA polymerase II and the general transcription factors. The polypeptide is Mediator of RNA polymerase II transcription subunit 4 (MED4) (Homo sapiens (Human)).